Here is a 487-residue protein sequence, read N- to C-terminus: ATP synthase subunit beta, plastid (487 aa).

Position 169-176 (169-176) interacts with ATP; sequence GGAGVGKT.

This sequence belongs to the ATPase alpha/beta chains family. As to quaternary structure, F-type ATPases have 2 components, CF(1) - the catalytic core - and CF(0) - the membrane proton channel. CF(1) has five subunits: alpha(3), beta(3), gamma(1), delta(1), epsilon(1). CF(0) has four main subunits: a(1), b(1), b'(1) and c(9-12).

The protein localises to the plastid membrane. The enzyme catalyses ATP + H2O + 4 H(+)(in) = ADP + phosphate + 5 H(+)(out). Produces ATP from ADP in the presence of a proton gradient across the membrane. The catalytic sites are hosted primarily by the beta subunits. The polypeptide is ATP synthase subunit beta, plastid (atpB) (Cuscuta pentagona (Five-angled dodder)).